Consider the following 377-residue polypeptide: Succinyl-diaminopimelate desuccinylase (377 aa).

His68 contacts Zn(2+). Residue Asp70 is part of the active site. Residue Asp101 participates in Zn(2+) binding. Glu135 acts as the Proton acceptor in catalysis. Zn(2+) is bound by residues Glu136, Glu164, and His350.

This sequence belongs to the peptidase M20A family. DapE subfamily. As to quaternary structure, homodimer. Zn(2+) is required as a cofactor. Requires Co(2+) as cofactor.

The catalysed reaction is N-succinyl-(2S,6S)-2,6-diaminopimelate + H2O = (2S,6S)-2,6-diaminopimelate + succinate. It participates in amino-acid biosynthesis; L-lysine biosynthesis via DAP pathway; LL-2,6-diaminopimelate from (S)-tetrahydrodipicolinate (succinylase route): step 3/3. Catalyzes the hydrolysis of N-succinyl-L,L-diaminopimelic acid (SDAP), forming succinate and LL-2,6-diaminopimelate (DAP), an intermediate involved in the bacterial biosynthesis of lysine and meso-diaminopimelic acid, an essential component of bacterial cell walls. This chain is Succinyl-diaminopimelate desuccinylase, found in Vibrio cholerae serotype O1 (strain ATCC 39541 / Classical Ogawa 395 / O395).